A 328-amino-acid polypeptide reads, in one-letter code: Glutathionyl-hydroquinone reductase YqjG (328 aa).

The active-site Nucleophile is the Cys-63. Residues Trp-96, 130–133, and 148–149 contribute to the glutathione site; these read RVTV and ES. The GST C-terminal domain occupies 172-296; the sequence is PPALQTKIDE…VNFDHIRNHY (125 aa). Residue Tyr-195 is the Proton donor/acceptor of the active site. The dimerization stretch occupies residues 203–311; it reads QEAYDEAVAK…TINPTGIISI (109 aa).

This sequence belongs to the GST superfamily. Xi-class GSH transferase family. Homodimer.

The enzyme catalyses 2-(glutathione-S-yl)-hydroquinone + glutathione = hydroquinone + glutathione disulfide. In terms of biological role, catalyzes glutathione (GSH)-dependent reduction of glutathionyl-hydroquinones (GS-HQs) to the corresponding hydroquinones. Can use a variety of GS-HQs as substrates, such as GS-p-hydroquinone (GS-HQ), GS-hydroxy-p-hydroquinone (GS-HHQ), GS-methyl-p-hydroquinone (GS-MHQ), GS-menadiol, and GS-trichloro-p-hydroquinone (GS-TriCH). Also displays GSH-dependent disulfide-bond reduction activity toward HED (2-hydroxyethyl disulfide), and is able to catalyze DMA (dimethylarsinate) reduction. Exhibits no GSH transferase activity with 1-chloro-2,4-dinitrobenzene (CDNB). This Escherichia coli (strain K12) protein is Glutathionyl-hydroquinone reductase YqjG (yqjG).